A 208-amino-acid chain; its full sequence is Thymidylate kinase (208 aa).

Gly-10 to Thr-17 is a binding site for ATP.

It belongs to the thymidylate kinase family.

The catalysed reaction is dTMP + ATP = dTDP + ADP. Phosphorylation of dTMP to form dTDP in both de novo and salvage pathways of dTTP synthesis. The protein is Thymidylate kinase of Listeria welshimeri serovar 6b (strain ATCC 35897 / DSM 20650 / CCUG 15529 / CIP 8149 / NCTC 11857 / SLCC 5334 / V8).